The sequence spans 469 residues: 3-isopropylmalate dehydratase large subunit (469 aa).

[4Fe-4S] cluster is bound by residues Cys-347, Cys-407, and Cys-410.

It belongs to the aconitase/IPM isomerase family. LeuC type 1 subfamily. In terms of assembly, heterodimer of LeuC and LeuD. Requires [4Fe-4S] cluster as cofactor.

It catalyses the reaction (2R,3S)-3-isopropylmalate = (2S)-2-isopropylmalate. The protein operates within amino-acid biosynthesis; L-leucine biosynthesis; L-leucine from 3-methyl-2-oxobutanoate: step 2/4. Functionally, catalyzes the isomerization between 2-isopropylmalate and 3-isopropylmalate, via the formation of 2-isopropylmaleate. The protein is 3-isopropylmalate dehydratase large subunit of Prochlorococcus marinus (strain NATL2A).